Here is a 229-residue protein sequence, read N- to C-terminus: Golgi to ER traffic protein 1 (229 aa).

The Lumenal portion of the chain corresponds to 1-14 (MGILAALDLHPYTL). A helical membrane pass occupies residues 15–34 (VVSSFTVLLIQQLVGFIGKS). Residues 35–122 (TIQEFAWLFY…KINSLVGVVL (88 aa)) lie on the Cytoplasmic side of the membrane. A coiled-coil region spans residues 60–117 (HTKKQEELHKLNREKRSISAQDEYAKWTKLNRQAEKLTAEVKSLSDDIAKDKSKINSL). The chain crosses the membrane as a helical span at residues 123 to 143 (LFLTTLPLWVFRLWFRKSVLF). Residues 144–167 (YLPTGVFPYYVERVLAIPFFASGS) are Lumenal-facing. The helical transmembrane segment at 168–184 (VGLTVWMFAVNNVISSV) threads the bilayer. At 185–229 (LFLLTFPFKPSVPIPIRQTKVEEVVPESAESKESSPEVIDIADAN) the chain is on the cytoplasmic side. Over residues 210–219 (PESAESKESS) the composition is skewed to basic and acidic residues. The interval 210–229 (PESAESKESSPEVIDIADAN) is disordered.

This sequence belongs to the WRB/GET1 family. As to quaternary structure, component of the Golgi to ER traffic (GET) complex, which is composed of GET1, GET2 and GET3. Within the complex, GET1 and GET2 form a heterotetramer which is stabilized by phosphatidylinositol binding and which binds to the GET3 homodimer.

The protein resides in the endoplasmic reticulum membrane. Its subcellular location is the golgi apparatus membrane. In terms of biological role, required for the post-translational delivery of tail-anchored (TA) proteins to the endoplasmic reticulum. Together with GET2, acts as a membrane receptor for soluble GET3, which recognizes and selectively binds the transmembrane domain of TA proteins in the cytosol. The GET complex cooperates with the HDEL receptor ERD2 to mediate the ATP-dependent retrieval of resident ER proteins that contain a C-terminal H-D-E-L retention signal from the Golgi to the ER. The polypeptide is Golgi to ER traffic protein 1 (Scheffersomyces stipitis (strain ATCC 58785 / CBS 6054 / NBRC 10063 / NRRL Y-11545) (Yeast)).